Reading from the N-terminus, the 301-residue chain is Probable alpha-L-glutamate ligase (301 aa).

The 184-residue stretch at 104–287 (LQLLSRKGIG…IAGLIVAYME (184 aa)) folds into the ATP-grasp domain. ATP-binding positions include lysine 141, 178-179 (EF), aspartate 187, and 211-213 (RSN). Mg(2+)-binding residues include aspartate 248, glutamate 260, and asparagine 262. Mn(2+)-binding residues include aspartate 248, glutamate 260, and asparagine 262.

It belongs to the RimK family. The cofactor is Mg(2+). Mn(2+) is required as a cofactor.

This Cellvibrio japonicus (strain Ueda107) (Pseudomonas fluorescens subsp. cellulosa) protein is Probable alpha-L-glutamate ligase.